Here is a 278-residue protein sequence, read N- to C-terminus: Phosphatidylglycerol--prolipoprotein diacylglyceryl transferase (278 aa).

3 helical membrane passes run 13–33 (LFGI…ALAV), 50–70 (VFDF…LYYV), and 89–109 (NGGL…FFFT). Arg-135 is a binding site for a 1,2-diacyl-sn-glycero-3-phospho-(1'-sn-glycerol). A run of 3 helical transmembrane segments spans residues 175–195 (QPTF…LVLL), 205–225 (GEVF…IEGL), and 236–256 (IRVS…IVIV).

Belongs to the Lgt family.

The protein localises to the cell membrane. It carries out the reaction L-cysteinyl-[prolipoprotein] + a 1,2-diacyl-sn-glycero-3-phospho-(1'-sn-glycerol) = an S-1,2-diacyl-sn-glyceryl-L-cysteinyl-[prolipoprotein] + sn-glycerol 1-phosphate + H(+). The protein operates within protein modification; lipoprotein biosynthesis (diacylglyceryl transfer). Catalyzes the transfer of the diacylglyceryl group from phosphatidylglycerol to the sulfhydryl group of the N-terminal cysteine of a prolipoprotein, the first step in the formation of mature lipoproteins. The polypeptide is Phosphatidylglycerol--prolipoprotein diacylglyceryl transferase (Enterococcus faecalis (strain ATCC 700802 / V583)).